We begin with the raw amino-acid sequence, 313 residues long: 4-diphosphocytidyl-2-C-methyl-D-erythritol kinase (313 aa).

Residue lysine 10 is part of the active site. Residue 95–105 (PVTAGLGGGSS) participates in ATP binding. Residue aspartate 136 is part of the active site. The interval 289–313 (HPRVSPWRSPRSASSRSTRRSSRPT) is disordered. Residues 292–304 (VSPWRSPRSASSR) are compositionally biased toward low complexity.

This sequence belongs to the GHMP kinase family. IspE subfamily.

It catalyses the reaction 4-CDP-2-C-methyl-D-erythritol + ATP = 4-CDP-2-C-methyl-D-erythritol 2-phosphate + ADP + H(+). The protein operates within isoprenoid biosynthesis; isopentenyl diphosphate biosynthesis via DXP pathway; isopentenyl diphosphate from 1-deoxy-D-xylulose 5-phosphate: step 3/6. In terms of biological role, catalyzes the phosphorylation of the position 2 hydroxy group of 4-diphosphocytidyl-2C-methyl-D-erythritol. This Anaeromyxobacter sp. (strain K) protein is 4-diphosphocytidyl-2-C-methyl-D-erythritol kinase.